The primary structure comprises 458 residues: Photosystem II CP43 reaction center protein (458 aa).

5 consecutive transmembrane segments (helical) span residues 54–78, 119–140, 163–185, 240–260, and 276–297; these read LFEV…PHLA, LRGP…KDKN, KAMF…RVIT, RPFN…LSYS, and WFNN…ASQA. Glu352 provides a ligand contact to [CaMn4O5] cluster. The chain crosses the membrane as a helical span at residues 432–456; the sequence is RARAAAAGFEKGIDRKTEPVLSMSD.

This sequence belongs to the PsbB/PsbC family. PsbC subfamily. PSII is composed of 1 copy each of membrane proteins PsbA, PsbB, PsbC, PsbD, PsbE, PsbF, PsbH, PsbI, PsbJ, PsbK, PsbL, PsbM, PsbT, PsbX, PsbY, PsbZ, Psb30/Ycf12, peripheral proteins PsbO, CyanoQ (PsbQ), PsbU, PsbV and a large number of cofactors. It forms dimeric complexes. It depends on Binds multiple chlorophylls and provides some of the ligands for the Ca-4Mn-5O cluster of the oxygen-evolving complex. It may also provide a ligand for a Cl- that is required for oxygen evolution. PSII binds additional chlorophylls, carotenoids and specific lipids. as a cofactor.

It localises to the cellular thylakoid membrane. One of the components of the core complex of photosystem II (PSII). It binds chlorophyll and helps catalyze the primary light-induced photochemical processes of PSII. PSII is a light-driven water:plastoquinone oxidoreductase, using light energy to abstract electrons from H(2)O, generating O(2) and a proton gradient subsequently used for ATP formation. This Prochlorothrix hollandica protein is Photosystem II CP43 reaction center protein.